The sequence spans 567 residues: Multidrug transporter TPO1_1 (567 aa).

The disordered stretch occupies residues 1 to 71 (MVEEISPKYT…NRRMSRILTG (71 aa)). N120 is a glycosylation site (N-linked (GlcNAc...) asparagine). 12 helical membrane passes run 128-148 (IICI…SIFA), 157-177 (IYHV…FGFA), 194-214 (GVLV…ATSK), 224-244 (FFGG…FADM), 253-273 (AICL…VMGS), 283-303 (WLEY…ALTF), 358-378 (PLLL…YLML), 396-416 (ELPY…LWYF), 436-456 (LIPM…FCWT), 471-491 (AGSF…NYII), 498-520 (AASA…PLFA), and 531-551 (WAGL…LFFL).

The protein belongs to the major facilitator superfamily. DHA1 family. Polyamines/proton antiporter (TC 2.A.1.2.16) subfamily.

It is found in the cell membrane. Its function is as follows. Multidrug resistance transporter involved in resistance to azole antifungal drugs such as the imidazoles miconazole, ketoconazole, and tioconazole; as well as the triazoles itraconazole and fluconazole. Also plays a role in the resistance to other antifungal drug families such as the polyene amphotericin B, the pyrimide analog flucytosine, the fungicide mancozeb, and the polyamine spermine. Decreases the intracellular accumulation of clotrimazole by mediating its extrusion from cells. Involved in virulence by conferring resistance to the human antimicrobial peptide histatin-5. In Candida glabrata (strain ATCC 2001 / BCRC 20586 / JCM 3761 / NBRC 0622 / NRRL Y-65 / CBS 138) (Yeast), this protein is Multidrug transporter TPO1_1.